Here is a 187-residue protein sequence, read N- to C-terminus: Elongation factor P (187 aa).

The protein belongs to the elongation factor P family.

It localises to the cytoplasm. It participates in protein biosynthesis; polypeptide chain elongation. Functionally, involved in peptide bond synthesis. Stimulates efficient translation and peptide-bond synthesis on native or reconstituted 70S ribosomes in vitro. Probably functions indirectly by altering the affinity of the ribosome for aminoacyl-tRNA, thus increasing their reactivity as acceptors for peptidyl transferase. This chain is Elongation factor P, found in Prochlorococcus marinus (strain NATL1A).